A 336-amino-acid chain; its full sequence is Cytoskeleton protein RodZ (336 aa).

Residues 1–111 (MNTEATHDQN…LGKRRKKRDG (111 aa)) are Cytoplasmic-facing. Residues 19-71 (LRNAREQLGLSQQAVAERLCLKVSTVRDIEEDKAPADLASTFLRGYIRSYARL) form the HTH cro/C1-type domain. Positions 30-49 (QQAVAERLCLKVSTVRDIEE) form a DNA-binding region, H-T-H motif. The helical; Signal-anchor for type II membrane protein transmembrane segment at 112–132 (WLMTFTWLVLFVVIGLSGAWW) threads the bilayer. At 133 to 336 (WQDHKAQQEE…TLNAEQSPAQ (204 aa)) the chain is on the periplasmic side. Positions 148 to 164 (DQSSAELNNNQSQSVPL) are enriched in polar residues. Residues 148-248 (DQSSAELNNN…TDQAGVTTPA (101 aa)) are disordered. The span at 165 to 201 (DTSTTTDQAMATTPTSPVDTTATNTQTPAATTAPSPT) shows a compositional bias: low complexity. A compositionally biased stretch (polar residues) spans 202–217 (VDSQQNAVVPPSQANV). The segment covering 219 to 236 (TAATPAPAATTMPDGAAP) has biased composition (low complexity).

It belongs to the RodZ family.

The protein localises to the cell inner membrane. Its function is as follows. Cytoskeletal protein that is involved in cell-shape control through regulation of the length of the long axis. The sequence is that of Cytoskeleton protein RodZ from Escherichia coli (strain SMS-3-5 / SECEC).